A 134-amino-acid polypeptide reads, in one-letter code: Large ribosomal subunit protein uL14 (134 aa).

This sequence belongs to the universal ribosomal protein uL14 family. In terms of assembly, part of the 50S ribosomal subunit. Forms a cluster with proteins L3 and L19. In the 70S ribosome, L14 and L19 interact and together make contacts with the 16S rRNA in bridges B5 and B8.

Functionally, binds to 23S rRNA. Forms part of two intersubunit bridges in the 70S ribosome. This Deinococcus deserti (strain DSM 17065 / CIP 109153 / LMG 22923 / VCD115) protein is Large ribosomal subunit protein uL14.